Consider the following 138-residue polypeptide: uncharacterized protein (138 aa).

The helical transmembrane segment at 11 to 33 (ILLGLTLSLTFLYPLIITLIILY) threads the bilayer.

Its subcellular location is the membrane. This is an uncharacterized protein from Aquifex aeolicus (strain VF5).